We begin with the raw amino-acid sequence, 219 residues long: Ribose-5-phosphate isomerase A (219 aa).

Residues 28–31 (TGST), 81–84 (DGAD), and 94–97 (KGGG) contribute to the substrate site. The active-site Proton acceptor is the glutamate 103. Lysine 121 is a substrate binding site.

It belongs to the ribose 5-phosphate isomerase family. As to quaternary structure, homodimer.

It catalyses the reaction aldehydo-D-ribose 5-phosphate = D-ribulose 5-phosphate. Its pathway is carbohydrate degradation; pentose phosphate pathway; D-ribose 5-phosphate from D-ribulose 5-phosphate (non-oxidative stage): step 1/1. In terms of biological role, catalyzes the reversible conversion of ribose-5-phosphate to ribulose 5-phosphate. The polypeptide is Ribose-5-phosphate isomerase A (Shewanella oneidensis (strain ATCC 700550 / JCM 31522 / CIP 106686 / LMG 19005 / NCIMB 14063 / MR-1)).